An 887-amino-acid polypeptide reads, in one-letter code: Autotaxin (887 aa).

The N-terminal stretch at 1 to 27 is a signal peptide; the sequence is MARQGCLGSFQVISLFTFAISVNICLG. The propeptide at 28–35 is removed by furin; it reads FTASRIKR. A glycan (N-linked (GlcNAc...) asparagine) is linked at Asn-53. 2 consecutive SMB domains span residues 54–97 and 98–142; these read TSGS…LKTA and RGWE…GESH. 10 disulfides stabilise this stretch: Cys-58–Cys-75, Cys-62–Cys-93, Cys-73–Cys-86, Cys-79–Cys-85, Cys-102–Cys-119, Cys-107–Cys-137, Cys-117–Cys-130, Cys-123–Cys-129, Cys-148–Cys-194, and Cys-156–Cys-350. The short motif at 126 to 128 is the Cell attachment site element; sequence RGD. The tract at residues 144–501 is phosphodiesterase; it reads VDDDCEEIKV…PTFKYRTKVP (358 aa). Zn(2+) is bound by residues Asp-171 and Thr-209. Thr-209 serves as the catalytic Nucleophile. 3 residues coordinate 1-(9Z-octadecenoyl)-sn-glycero-3-phosphate: Thr-209, Asn-230, and Asp-311. Thr-209, Asn-230, and Asp-311 together coordinate 1-hexadecanoyl-sn-glycero-3-phosphate. Residues Thr-209, Asn-230, and Asp-311 each coordinate 1-tetradecanoyl-sn-glycerol 3-phosphate. 4 residues coordinate Zn(2+): Asp-311, His-315, Asp-358, and His-359. 5 cysteine pairs are disulfide-bonded: Cys-366-Cys-468, Cys-413-Cys-830, Cys-566-Cys-691, Cys-568-Cys-676, and Cys-799-Cys-809. Asn-398 and Asn-410 each carry an N-linked (GlcNAc...) asparagine glycan. Residue His-474 participates in Zn(2+) binding. 1-(9Z-octadecenoyl)-sn-glycero-3-phosphate is bound at residue His-474. Residue His-474 participates in 1-hexadecanoyl-sn-glycero-3-phosphate binding. His-474 lines the 1-tetradecanoyl-sn-glycerol 3-phosphate pocket. An N-linked (GlcNAc...) asparagine glycan is attached at Asn-524. A compositionally biased stretch (basic and acidic residues) spans 586-607; it reads HTKGSTEAETGKFRGSKHENKK. The tract at residues 586 to 615 is disordered; that stretch reads HTKGSTEAETGKFRGSKHENKKNLNGSVEP. Asn-610 carries an N-linked (GlcNAc...) asparagine glycan. The segment at 622–887 is nuclease-like domain; the sequence is LYGRPAVLYR…TYLHTYESEI (266 aa). Asp-764, Asn-766, Asp-768, Leu-770, and Asp-772 together coordinate Ca(2+). Residue Asn-831 is glycosylated (N-linked (GlcNAc...) asparagine). A required for secretion region spans residues 854–875; that stretch reads IEHLTGLDFYRKTSRSYSEILT.

The protein belongs to the nucleotide pyrophosphatase/phosphodiesterase family. Zn(2+) serves as cofactor. The cofactor is Ca(2+). Post-translationally, N-glycosylation, but not furin-cleavage, plays a critical role on secretion and on lysoPLD activity. In terms of processing, the interdomain disulfide bond between Cys-413 and Cys-830 is essential for catalytic activity. In terms of tissue distribution, abundantly expressed in cerebrum and cerebellum. Localized in secretory epithelial cells in the brain and the eye including choroid plexus epithelial cells, ciliary epithelial cells, iris pigment epithelial cells, and retinal pigment cells.

The protein localises to the secreted. The enzyme catalyses a 1-O-alkyl-sn-glycero-3-phosphoethanolamine + H2O = a 1-O-alkyl-sn-glycero-3-phosphate + ethanolamine + H(+). It catalyses the reaction a 1-acyl-sn-glycero-3-phosphoethanolamine + H2O = a 1-acyl-sn-glycero-3-phosphate + ethanolamine + H(+). It carries out the reaction 1-(9Z-octadecenoyl)-sn-glycero-3-phosphoethanolamine + H2O = 1-(9Z-octadecenoyl)-sn-glycero-3-phosphate + ethanolamine + H(+). The catalysed reaction is a 1-O-alkyl-sn-glycero-3-phosphocholine + H2O = a 1-O-alkyl-sn-glycero-3-phosphate + choline + H(+). The enzyme catalyses 1-O-(9Z-octadecenyl)-sn-glycero-3-phosphocholine + H2O = 1-O-(9Z-octadecenyl)-sn-glycero-3-phosphate + choline + H(+). It catalyses the reaction 1-O-hexadecyl-sn-glycero-3-phosphocholine + H2O = 1-O-hexadecyl-sn-glycero-3-phosphate + choline + H(+). It carries out the reaction a 1-O-(1Z-alkenyl)-sn-glycero-3-phosphocholine + H2O = a 1-O-(1Z-alkenyl)-sn-glycero-3-phosphate + choline + H(+). The catalysed reaction is a 1-acyl-sn-glycero-3-phosphocholine + H2O = a 1-acyl-sn-glycero-3-phosphate + choline + H(+). The enzyme catalyses 1-dodecanoyl-sn-glycero-3-phosphocholine + H2O = 1-dodecanoyl-sn-glycerol 3-phosphate + choline + H(+). It catalyses the reaction 1-(9Z-octadecenoyl)-sn-glycero-3-phosphocholine + H2O = 1-(9Z-octadecenoyl)-sn-glycero-3-phosphate + choline + H(+). It carries out the reaction 1-tetradecanoyl-sn-glycero-3-phosphocholine + H2O = 1-tetradecanoyl-sn-glycerol 3-phosphate + choline + H(+). The catalysed reaction is 1-decanoyl-sn-glycero-3-phosphocholine + H2O = 1-decanoyl-sn-glycero-3-phosphate + choline + H(+). The enzyme catalyses 1-octadecanoyl-sn-glycero-3-phosphocholine + H2O = 1-octadecanoyl-sn-glycero-3-phosphate + choline + H(+). It catalyses the reaction 1-hexadecanoyl-sn-glycero-3-phosphocholine + H2O = 1-hexadecanoyl-sn-glycero-3-phosphate + choline + H(+). It carries out the reaction 1-hexanoyl-sn-glycero-3-phosphocholine + H2O = 1-hexanoyl-sn-glycero-3-phosphate + choline + H(+). The catalysed reaction is 1-(9Z,12Z)-octadecadienoyl-sn-glycero-3-phosphocholine + H2O = 1-(9Z,12Z)-octadecadienoyl-sn-glycero-3-phosphate + choline + H(+). The enzyme catalyses sphing-4-enine-phosphocholine + H2O = sphing-4-enine 1-phosphate + choline + H(+). It catalyses the reaction 1-(5Z,8Z,11Z,14Z-eicosatetraenoyl)-sn-glycero-3-phosphocholine + H2O = 1-(5Z,8Z,11Z,14Z-eicosatetraenoyl)-sn-glycero-3-phosphate + choline + H(+). It carries out the reaction a 2-acyl-sn-glycero-3-phosphocholine + H2O = a 2-acyl-sn-glycerol 3-phosphate + choline + H(+). The catalysed reaction is a 1,2-diacyl-sn-glycero-3-phosphocholine + H2O = a 1,2-diacyl-sn-glycero-3-phosphate + choline + H(+). The enzyme catalyses 1,2-dioctanoyl-sn-glycero-3-phosphocholine + H2O = 1,2-dioctanoyl-sn-glycero-3-phosphate + choline + H(+). It catalyses the reaction 1,2-didecanoyl-sn-glycero-3-phosphocholine + H2O = 1,2-didecanoyl-sn-glycero-3-phosphate + choline + H(+). It carries out the reaction a 1-acyl-sn-glycero-3-phospho-L-serine + H2O = a 1-acyl-sn-glycero-3-phosphate + L-serine + H(+). The catalysed reaction is 1-(9Z-octadecenoyl)-sn-glycero-3-phospho-L-serine + H2O = 1-(9Z-octadecenoyl)-sn-glycero-3-phosphate + L-serine + H(+). The enzyme catalyses a 2-acyl-sn-glycero-3-phospho-L-serine + H2O = a 2-acyl-sn-glycerol 3-phosphate + L-serine + H(+). Inhibited by vanadate. Inhibited by micromolar levels of bile salts, such as tauroursodeoxycholate. Not inhibited by taurodeoxycholate. Not inhibited by hydroxysterols, such as 7-hydroxycholesterol, testosterone, dexamethasone and prednisolone. Inhibited by EDTA and EGTA. Its function is as follows. Secreted lysophospholipase D that hydrolyzes lysophospholipids to produce the signaling molecule lysophosphatidic acid (LPA) in extracellular fluids. Its major substrate is lysophosphatidylcholine. Can also act on sphingosylphosphorylcholine producing sphingosine-1-phosphate, a modulator of cell motility. Can hydrolyze, in vitro, bis-pNPP, to some extent pNP-TMP, and barely ATP. Involved in several motility-related processes such as angiogenesis and neurite outgrowth. Acts as an angiogenic factor by stimulating migration of smooth muscle cells and microtubule formation. Stimulates migration of melanoma cells, probably via a pertussis toxin-sensitive G protein. May have a role in induction of parturition. Possible involvement in cell proliferation and adipose tissue development. Required for LPA production in activated platelets, cleaves the sn-1 lysophospholipids to generate sn-1 lysophosphatidic acids containing predominantly 18:2 and 20:4 fatty acids. Shows a preference for the sn-1 to the sn-2 isomer of 1-O-alkyl-sn-glycero-3-phosphocholine (lyso-PAF). The protein is Autotaxin of Rattus norvegicus (Rat).